A 443-amino-acid chain; its full sequence is Xaa-Pro dipeptidase (443 aa).

Asp-246, Asp-257, His-339, Glu-384, and Glu-423 together coordinate Mn(2+).

It belongs to the peptidase M24B family. Bacterial-type prolidase subfamily. Mn(2+) serves as cofactor.

It catalyses the reaction Xaa-L-Pro dipeptide + H2O = an L-alpha-amino acid + L-proline. Its function is as follows. Splits dipeptides with a prolyl residue in the C-terminal position. In Escherichia coli O7:K1 (strain IAI39 / ExPEC), this protein is Xaa-Pro dipeptidase.